The primary structure comprises 311 residues: Coproporphyrin III ferrochelatase 1 (311 aa).

Residues Y12, R29, 45 to 46 (RY), S53, and Y124 contribute to the Fe-coproporphyrin III site. H182 and E263 together coordinate Fe(2+).

The protein belongs to the ferrochelatase family.

It localises to the cytoplasm. It carries out the reaction Fe-coproporphyrin III + 2 H(+) = coproporphyrin III + Fe(2+). The protein operates within porphyrin-containing compound metabolism; protoheme biosynthesis. Involved in coproporphyrin-dependent heme b biosynthesis. Catalyzes the insertion of ferrous iron into coproporphyrin III to form Fe-coproporphyrin III. This is Coproporphyrin III ferrochelatase 1 from Bacillus anthracis.